The primary structure comprises 483 residues: Glutamyl-tRNA(Gln) amidotransferase subunit A (483 aa).

Residues lysine 76 and serine 151 each act as charge relay system in the active site. Serine 175 functions as the Acyl-ester intermediate in the catalytic mechanism.

It belongs to the amidase family. GatA subfamily. Heterotrimer of A, B and C subunits.

It catalyses the reaction L-glutamyl-tRNA(Gln) + L-glutamine + ATP + H2O = L-glutaminyl-tRNA(Gln) + L-glutamate + ADP + phosphate + H(+). Its function is as follows. Allows the formation of correctly charged Gln-tRNA(Gln) through the transamidation of misacylated Glu-tRNA(Gln) in organisms which lack glutaminyl-tRNA synthetase. The reaction takes place in the presence of glutamine and ATP through an activated gamma-phospho-Glu-tRNA(Gln). In Pseudomonas fluorescens (strain ATCC BAA-477 / NRRL B-23932 / Pf-5), this protein is Glutamyl-tRNA(Gln) amidotransferase subunit A.